Reading from the N-terminus, the 586-residue chain is Germ cell nuclear acidic protein (586 aa).

4 disordered regions span residues 17-119, 176-202, 217-266, and 279-318; these read GWDR…LSSE, KAKTVKTPKSVQKTKKPAPSLCNSPVF, TWRT…SSEE, and LGGRTSASPMPSAEPKPQRPCLSTPSATGRKTGSQVPVKD. The segment covering 65–76 has biased composition (basic and acidic residues); it reads SGKENRSQEEHI. The segment covering 94–107 has biased composition (polar residues); sequence TPKSTFKQSASSAQ. Residues 176–191 are compositionally biased toward basic residues; it reads KAKTVKTPKSVQKTKK. Basic and acidic residues predominate over residues 225–244; the sequence is PPSDEHQATSKDREETEKPR. The segment covering 299 to 313 has biased composition (polar residues); it reads CLSTPSATGRKTGSQ. A SprT-like domain is found at 383 to 482; that stretch reads KLYQLYNTSV…LYARKAMLAH (100 aa).

It belongs to the serine-aspartate repeat-containing protein (SDr) family.

Its subcellular location is the nucleus. The protein localises to the PML body. It localises to the chromosome. Its function is as follows. May play a role in DNA-protein cross-links (DPCs) clearance, ensuring the genomic stability by protecting germ cells and early embryos from various sources of damage. This chain is Germ cell nuclear acidic protein (gcna), found in Danio rerio (Zebrafish).